Here is a 620-residue protein sequence, read N- to C-terminus: 1-deoxy-D-xylulose-5-phosphate synthase (620 aa).

Thiamine diphosphate contacts are provided by residues His-80 and 121–123 (GHS). Position 152 (Asp-152) interacts with Mg(2+). Thiamine diphosphate contacts are provided by residues 153 to 154 (GA), Asn-181, Tyr-288, and Glu-370. Asn-181 is a binding site for Mg(2+).

Belongs to the transketolase family. DXPS subfamily. As to quaternary structure, homodimer. Requires Mg(2+) as cofactor. Thiamine diphosphate is required as a cofactor.

The enzyme catalyses D-glyceraldehyde 3-phosphate + pyruvate + H(+) = 1-deoxy-D-xylulose 5-phosphate + CO2. It functions in the pathway metabolic intermediate biosynthesis; 1-deoxy-D-xylulose 5-phosphate biosynthesis; 1-deoxy-D-xylulose 5-phosphate from D-glyceraldehyde 3-phosphate and pyruvate: step 1/1. Functionally, catalyzes the acyloin condensation reaction between C atoms 2 and 3 of pyruvate and glyceraldehyde 3-phosphate to yield 1-deoxy-D-xylulose-5-phosphate (DXP). The sequence is that of 1-deoxy-D-xylulose-5-phosphate synthase from Salmonella choleraesuis (strain SC-B67).